The chain runs to 354 residues: 3-dehydroquinate synthase (354 aa).

Residues 100–104, 124–125, Lys-136, Lys-145, and 163–166 contribute to the NAD(+) site; these read GATGD, TT, and FLKT. Zn(2+) contacts are provided by Glu-178, His-242, and His-256.

This sequence belongs to the sugar phosphate cyclases superfamily. Dehydroquinate synthase family. It depends on NAD(+) as a cofactor. The cofactor is Co(2+). Requires Zn(2+) as cofactor.

It localises to the cytoplasm. It carries out the reaction 7-phospho-2-dehydro-3-deoxy-D-arabino-heptonate = 3-dehydroquinate + phosphate. The protein operates within metabolic intermediate biosynthesis; chorismate biosynthesis; chorismate from D-erythrose 4-phosphate and phosphoenolpyruvate: step 2/7. In terms of biological role, catalyzes the conversion of 3-deoxy-D-arabino-heptulosonate 7-phosphate (DAHP) to dehydroquinate (DHQ). The chain is 3-dehydroquinate synthase from Staphylococcus aureus (strain COL).